A 342-amino-acid polypeptide reads, in one-letter code: Probable tyrosine--tRNA ligase, cytoplasmic (342 aa).

Tyr-48 is an L-tyrosine binding site. Residues 53-61 carry the 'HIGH' region motif; sequence ITGKPHIGY. Positions 175, 179, 182, and 197 each coordinate L-tyrosine. The 'KMSKS' region motif lies at 231–235; that stretch reads KMSSS.

Belongs to the class-I aminoacyl-tRNA synthetase family. In terms of assembly, homodimer.

It localises to the cytoplasm. It carries out the reaction tRNA(Tyr) + L-tyrosine + ATP = L-tyrosyl-tRNA(Tyr) + AMP + diphosphate + H(+). This Enterocytozoon bieneusi (strain H348) (Microsporidian parasite) protein is Probable tyrosine--tRNA ligase, cytoplasmic.